The sequence spans 87 residues: Putative regulatory protein ABC2323 (87 aa).

This sequence belongs to the RemA family.

The polypeptide is Putative regulatory protein ABC2323 (Shouchella clausii (strain KSM-K16) (Alkalihalobacillus clausii)).